The sequence spans 933 residues: uncharacterized protein (933 aa).

A compositionally biased stretch (polar residues) spans 1–28; the sequence is MNGNLPHIQIQSPKNSLDHLNNGRQATH. Disordered stretches follow at residues 1 to 135, 173 to 194, and 252 to 275; these read MNGN…GESD, MDNE…NAAD, and ATDF…ADAQ. The segment covering 29–47 has biased composition (basic and acidic residues); it reads NFEHGKPGDREEANGHADA. Over residues 49–59 the composition is skewed to low complexity; that stretch reads SSSGRSRYLSS. Composition is skewed to polar residues over residues 87–101 and 108–135; these read TLSF…SNTH and NRSS…GESD. Positions 173-182 are enriched in acidic residues; sequence MDNESSEEER. The span at 264-275 shows a compositional bias: polar residues; the sequence is EPSSSRHTADAQ. WD repeat units follow at residues 314–353, 385–423, 425–465, 467–506, 517–563, 568–607, 617–657, and 665–710; these read SSNN…HARS, GHTA…CLCC, EHSD…VSFW, ELPE…FRTQ, AKGS…LELK, ANAQ…MHKT, ASVR…SVIS, and PSLR…AARK. The residue at position 722 (S722) is a Phosphoserine. The interval 756-796 is disordered; sequence NASQITNNENNGNDDIKKGDEPEEEHVGLRKNSTQEKNANL. Polar residues predominate over residues 757 to 768; that stretch reads ASQITNNENNGN. Over residues 769–783 the composition is skewed to basic and acidic residues; sequence DDIKKGDEPEEEHVG.

It localises to the endoplasmic reticulum. The protein resides in the nucleus. This is an uncharacterized protein from Schizosaccharomyces pombe (strain 972 / ATCC 24843) (Fission yeast).